Reading from the N-terminus, the 322-residue chain is Cytochrome f (322 aa).

A signal peptide spans 1–35; it reads MQNRNIFSWVKEQTTRSISVSIMILIYVITWTSIS. 4 residues coordinate heme: Tyr-38, Cys-58, Cys-61, and His-62. The helical transmembrane segment at 288–308 threads the bilayer; sequence VQGLFFFFASVILAQIFLVLK.

It belongs to the cytochrome f family. As to quaternary structure, the 4 large subunits of the cytochrome b6-f complex are cytochrome b6, subunit IV (17 kDa polypeptide, petD), cytochrome f and the Rieske protein, while the 4 small subunits are PetG, PetL, PetM and PetN. The complex functions as a dimer. Requires heme as cofactor.

The protein localises to the plastid. It is found in the chloroplast thylakoid membrane. Functionally, component of the cytochrome b6-f complex, which mediates electron transfer between photosystem II (PSII) and photosystem I (PSI), cyclic electron flow around PSI, and state transitions. The polypeptide is Cytochrome f (Nandina domestica (Heavenly bamboo)).